The following is a 539-amino-acid chain: T-complex protein 1 subunit delta (539 aa).

The interval 1 to 29 (MPENVAPRSGATAGAAGGRGKGAYQDRDK) is disordered. Residue R19 is modified to Omega-N-methylarginine. K21 is subject to N6-acetyllysine. Phosphoserine is present on S36. G53 is an ADP binding site. G53 is a binding site for ATP. D104 contacts Mg(2+). Residues G105, T106, T107, S108, N172, S173, and K174 each coordinate ADP. ATP contacts are provided by G105 and T106. ATP is bound at residue K174. Phosphoserine is present on residues S184 and S202. An N6-acetyllysine mark is found at K288, K302, K319, and K326. Position 425 (G425) interacts with ADP. S444 carries the phosphoserine modification. Q510 is a binding site for ADP.

Belongs to the TCP-1 chaperonin family. In terms of assembly, component of the chaperonin-containing T-complex (TRiC), a hexadecamer composed of two identical back-to-back stacked rings enclosing a protein folding chamber. Each ring is made up of eight different subunits: TCP1/CCT1, CCT2, CCT3, CCT4, CCT5, CCT6A/CCT6, CCT7, CCT8. Interacts with PACRG. Interacts with DNAAF4. Interacts with DLEC1.

Its subcellular location is the cytoplasm. The protein resides in the melanosome. It localises to the cytoskeleton. The protein localises to the microtubule organizing center. It is found in the centrosome. Its subcellular location is the cilium basal body. It catalyses the reaction ATP + H2O = ADP + phosphate + H(+). In terms of biological role, component of the chaperonin-containing T-complex (TRiC), a molecular chaperone complex that assists the folding of actin, tubulin and other proteins upon ATP hydrolysis. The TRiC complex mediates the folding of WRAP53/TCAB1, thereby regulating telomere maintenance. As part of the TRiC complex may play a role in the assembly of BBSome, a complex involved in ciliogenesis regulating transports vesicles to the cilia. This chain is T-complex protein 1 subunit delta (CCT4), found in Homo sapiens (Human).